We begin with the raw amino-acid sequence, 645 residues long: Cilia- and flagella-associated protein 221 homolog (645 aa).

Residues 381 to 408 (GGAVHQPSAPVGSSSSGGGGGSDPAFKP) are disordered. The segment at 428-435 (THQRLQRR) is interaction with calmodulin.

This sequence belongs to the PCDP1 family. As to quaternary structure, interacts with calmodulin; calcium-dependent. Part of the PDCP1 complex composed of CFAP46, CFAP54, CFAP74 and CFAP221; the PDCP1 complex binds calmodulin.

The protein localises to the cytoplasm. It is found in the cytoskeleton. It localises to the cilium axoneme. In terms of biological role, may play a role in cilium morphogenesis. This Chlamydomonas reinhardtii (Chlamydomonas smithii) protein is Cilia- and flagella-associated protein 221 homolog.